The primary structure comprises 317 residues: tRNA dimethylallyltransferase (317 aa).

19–26 (GPTASGKS) contacts ATP. 21–26 (TASGKS) is a substrate binding site. The interval 44–47 (DSMQ) is interaction with substrate tRNA.

Belongs to the IPP transferase family. Monomer. Mg(2+) is required as a cofactor.

It catalyses the reaction adenosine(37) in tRNA + dimethylallyl diphosphate = N(6)-dimethylallyladenosine(37) in tRNA + diphosphate. Its function is as follows. Catalyzes the transfer of a dimethylallyl group onto the adenine at position 37 in tRNAs that read codons beginning with uridine, leading to the formation of N6-(dimethylallyl)adenosine (i(6)A). This Methylorubrum extorquens (strain PA1) (Methylobacterium extorquens) protein is tRNA dimethylallyltransferase.